Here is a 30-residue protein sequence, read N- to C-terminus: Cyclotide hyen-C (30 aa).

A cross-link (cyclopeptide (Gly-Asn)) is located at residues 1 to 30; it reads GTHPCQETCVTSTRCSTQGCHCNWPICFKN. Cystine bridges form between Cys5–Cys20, Cys9–Cys22, and Cys15–Cys27.

This is a cyclic peptide. In terms of tissue distribution, detected in stems (at protein level).

In terms of biological role, probably participates in a plant defense mechanism. Does not display any cytotoxic activity towards K562, HeLa, MCF-7, HUVEC or red blood cells. Does not bind to phospholipd membranes containing 1-palmitoyl 2-oleoyl phosphatidylcholine (POPC) or 1-palmitoyl-2-oleophosphatidylethanolamine (POPE). The protein is Cyclotide hyen-C of Pigea enneasperma (Spade flower).